The primary structure comprises 186 residues: MIEASKLKAGMTFETADGKLIRVLEASHHKPGKGNTIMRMKLRDVRTGSTFDTSYRPEEKFEQAIIETVPAQYLYQMDDTAYFMNTETYDQYEIPVVNVEDELKYILENSDVKIQFYGSEVIGVTVPTTVELVVTETQPSIKGATVTGSGKPATLETGLVVNVPDFIEVGQKLIINTAEGTYVSRA.

It belongs to the elongation factor P family.

The protein localises to the cytoplasm. It participates in protein biosynthesis; polypeptide chain elongation. Functionally, involved in peptide bond synthesis. Stimulates efficient translation and peptide-bond synthesis on native or reconstituted 70S ribosomes in vitro. Probably functions indirectly by altering the affinity of the ribosome for aminoacyl-tRNA, thus increasing their reactivity as acceptors for peptidyl transferase. In Streptococcus gordonii (strain Challis / ATCC 35105 / BCRC 15272 / CH1 / DL1 / V288), this protein is Elongation factor P.